The chain runs to 798 residues: Nucleolin homolog 1 (798 aa).

Residues 1 to 548 (MGFDSPRGRG…IISEEERRRQ (548 aa)) are disordered. Over residues 8–34 (GRGGGGFRGGRGGGSGFTPRGGGGGFR) the composition is skewed to gly residues. Basic and acidic residues-rich tracts occupy residues 59-75 (GGDR…DREG), 88-98 (GGDRGGFRGGD), and 106-116 (GGDRGNFRGGD). 2 stretches are compositionally biased toward gly residues: residues 150–164 (RGGG…GRGG) and 171–184 (GGRG…GGSR). Acidic residues-rich tracts occupy residues 196-205 (SDGDDDEEEE), 226-242 (DDSG…DEEP), 258-278 (EDSD…DDDA), and 287-317 (VEED…EETE). The segment covering 328–350 (SLKSVDSTKGKQVNLSKVATPTT) has biased composition (polar residues). Composition is skewed to acidic residues over residues 378–404 (DDDS…EEED) and 424–450 (IEED…EEDT). Residues 467-476 (AANRAAASAA) are compositionally biased toward low complexity. The span at 478–504 (DSDEDEDEEDEEDVEEEDEEEEEEEDI) shows a compositional bias: acidic residues. Over residues 532–548 (VKSDGKSIISEEERRRQ) the composition is skewed to basic and acidic residues. Residues 638-713 (LQLFINALPG…HLVDVFYARH (76 aa)) enclose the RRM domain. The segment at 736 to 798 (PKVAADSSGD…FKKTGFKGKK (63 aa)) is disordered. The span at 743-762 (SGDDSEEVASSDEGIQEVEE) shows a compositional bias: acidic residues. A compositionally biased stretch (basic residues) spans 783 to 798 (QQKKPQFKKTGFKGKK).

Identified in an mRNP granule complex containing untranslated mRNAs.

The protein resides in the nucleus. It is found in the nucleolus. Functionally, nucleolin is the major nucleolar protein of growing eukaryotic cells. It is found associated with intranucleolar chromatin and pre-ribosomal particles. It induces chromatin decondensation by binding to histone H1. It is thought to play a role in pre-rRNA transcription and ribosome assembly. May play a role in the process of transcriptional elongation. Involved in phase separation into sub-nucleolar condensates. This is Nucleolin homolog 1 from Caenorhabditis elegans.